We begin with the raw amino-acid sequence, 401 residues long: MSDTKGAAEQGLQIDGDLINSNWNEVVDNFDDMKLKGELLRGIYAYGFERPSAIQQRAIMPIVTGRDCIAQAQSGTGKTATFSVSILQRIDTTVKKTQALVLAPTRELAQQIQKVVIALGDYLNVDCHACVGGTAVREDIARLNEGPHIVVGTPGRVFDMINRGALKTEAVMMFCLDEADEMLSTGFKESIYEIFQLLPGETQVVLLSATMAPEVLDVTKKFMRDPIRILVKKDELTLEGIRQFYINVEKEEWKLETLCDLYETVTITQAVIFCSTRRKVDWLTQQLHDRQFTVSAMHGDMKQEEREVIMKEFRSGSSRVLITTDLLARGIDVQQVSLVINYDLPSSKENYIHRIGRGGRFGRKGVAINFVSNEDKNMLEEIETYYNTQVEEMPLNVADLI.

The Q motif signature appears at 28–56 (DNFDDMKLKGELLRGIYAYGFERPSAIQQ). Residues 59–229 (IMPIVTGRDC…KKFMRDPIRI (171 aa)) enclose the Helicase ATP-binding domain. 72–79 (AQSGTGKT) contributes to the ATP binding site. A DEAD box motif is present at residues 177 to 180 (DEAD). The region spanning 240–401 (GIRQFYINVE…EMPLNVADLI (162 aa)) is the Helicase C-terminal domain.

It belongs to the DEAD box helicase family. eIF4A subfamily. In terms of assembly, component of the eIF4F complex, which composition varies with external and internal environmental conditions. It is composed of at least eIF4A, eIF4E and eIF4G.

Its subcellular location is the cytoplasm. The enzyme catalyses ATP + H2O = ADP + phosphate + H(+). Its function is as follows. ATP-dependent RNA helicase which is a subunit of the eIF4F complex involved in cap recognition and is required for mRNA binding to ribosome. In the current model of translation initiation, eIF4A unwinds RNA secondary structures in the 5'-UTR of mRNAs which is necessary to allow efficient binding of the small ribosomal subunit, and subsequent scanning for the initiator codon. This chain is ATP-dependent RNA helicase eIF4A (TIF1), found in Cryptococcus neoformans var. neoformans serotype D (strain B-3501A) (Filobasidiella neoformans).